A 270-amino-acid chain; its full sequence is Putative phosphoenolpyruvate synthase regulatory protein (270 aa).

Residue 150 to 157 (GVSRCGKT) coordinates ADP.

This sequence belongs to the pyruvate, phosphate/water dikinase regulatory protein family. PSRP subfamily.

The catalysed reaction is [pyruvate, water dikinase] + ADP = [pyruvate, water dikinase]-phosphate + AMP + H(+). The enzyme catalyses [pyruvate, water dikinase]-phosphate + phosphate + H(+) = [pyruvate, water dikinase] + diphosphate. Functionally, bifunctional serine/threonine kinase and phosphorylase involved in the regulation of the phosphoenolpyruvate synthase (PEPS) by catalyzing its phosphorylation/dephosphorylation. The chain is Putative phosphoenolpyruvate synthase regulatory protein from Shewanella sp. (strain ANA-3).